Consider the following 529-residue polypeptide: UDP-glucuronosyltransferase 2B33 (529 aa).

The N-terminal stretch at Met-1–Gly-24 is a signal peptide. Residues Asn-67 and Asn-68 are each glycosylated (N-linked (GlcNAc...) asparagine). Residues Ile-494–Phe-514 form a helical membrane-spanning segment.

This sequence belongs to the UDP-glycosyltransferase family.

The protein resides in the microsome membrane. The protein localises to the endoplasmic reticulum membrane. The enzyme catalyses glucuronate acceptor + UDP-alpha-D-glucuronate = acceptor beta-D-glucuronoside + UDP + H(+). In terms of biological role, UDPGTs are of major importance in the conjugation and subsequent elimination of potentially toxic xenobiotics and endogenous compounds. This isozyme has glucuronidating capacity on estriol and does not catalyze the glucuronidation of beta-estradiol. Capable of conjugating 4-hydroxyestrone, androsterone, diclofenac, and hyodeoxycholic acid. The polypeptide is UDP-glucuronosyltransferase 2B33 (UGT2B33) (Macaca mulatta (Rhesus macaque)).